A 471-amino-acid chain; its full sequence is NADH-quinone oxidoreductase subunit N 1 (471 aa).

14 consecutive transmembrane segments (helical) span residues 11-31 (ALVP…AGAW), 39-59 (TIHV…ALAA), 81-101 (AIVL…VAGH), 105-125 (TEFV…AGAG), 127-147 (LIML…LAGW), 162-182 (LAGA…FGVA), 200-220 (AAAA…AGAV), 234-254 (PPPV…VAFY), 270-290 (LITA…AFAQ), 296-316 (MLGY…AVAG), 324-344 (ALLL…AVVA), 365-385 (ALAL…AVFV), 398-418 (GLAW…FYYL), and 444-464 (AVAL…GIVL).

The protein belongs to the complex I subunit 2 family. NDH-1 is composed of 14 different subunits. Subunits NuoA, H, J, K, L, M, N constitute the membrane sector of the complex.

It localises to the cell membrane. It catalyses the reaction a quinone + NADH + 5 H(+)(in) = a quinol + NAD(+) + 4 H(+)(out). In terms of biological role, NDH-1 shuttles electrons from NADH, via FMN and iron-sulfur (Fe-S) centers, to quinones in the respiratory chain. The immediate electron acceptor for the enzyme in this species is believed to be a menaquinone. Couples the redox reaction to proton translocation (for every two electrons transferred, four hydrogen ions are translocated across the cytoplasmic membrane), and thus conserves the redox energy in a proton gradient. The chain is NADH-quinone oxidoreductase subunit N 1 from Streptomyces griseus subsp. griseus (strain JCM 4626 / CBS 651.72 / NBRC 13350 / KCC S-0626 / ISP 5235).